A 425-amino-acid chain; its full sequence is Glutamate-1-semialdehyde 2,1-aminomutase (425 aa).

K265 carries the N6-(pyridoxal phosphate)lysine modification.

It belongs to the class-III pyridoxal-phosphate-dependent aminotransferase family. HemL subfamily. In terms of assembly, homodimer. Requires pyridoxal 5'-phosphate as cofactor.

It is found in the cytoplasm. It carries out the reaction (S)-4-amino-5-oxopentanoate = 5-aminolevulinate. Its pathway is porphyrin-containing compound metabolism; protoporphyrin-IX biosynthesis; 5-aminolevulinate from L-glutamyl-tRNA(Glu): step 2/2. This chain is Glutamate-1-semialdehyde 2,1-aminomutase, found in Chromobacterium violaceum (strain ATCC 12472 / DSM 30191 / JCM 1249 / CCUG 213 / NBRC 12614 / NCIMB 9131 / NCTC 9757 / MK).